The sequence spans 89 residues: HssA/B-like protein 21 (89 aa).

This sequence belongs to the hssA/B family.

The protein is HssA/B-like protein 21 (hssl21) of Dictyostelium discoideum (Social amoeba).